The chain runs to 27 residues: Cysteine-rich venom protein tropirin (27 aa).

It belongs to the CRISP family. In terms of processing, contains 8 disulfide bonds. In terms of tissue distribution, expressed by the venom gland.

The protein localises to the secreted. In terms of biological role, blocks contraction of smooth muscle elicited by high potassium-induced depolarization, but does not block caffeine-stimulated contraction. May target voltage-gated calcium channels on smooth muscle. The chain is Cysteine-rich venom protein tropirin from Tropidechis carinatus (Australian rough-scaled snake).